The following is a 271-amino-acid chain: Secretagogin (271 aa).

6 consecutive EF-hand domains span residues 8–43 (LDAAEFLEIWQRFDADDNGYIEGKELDEFFCHLLKK), 53–88 (KVQGVKDRFMSAYDITADGRLQIQELANMILPEDEN), 100–135 (DNSVEFMRIWRKFDEDSSGFISAVELRNFLQDLFLQ), 144–179 (KLDEYTDTMMKLFNRNKDGRLDLNDLAKILALQENF), 192–227 (ERKSDFETIFAHYDVSKTGALEGPEVDGFVKDMMEL), and 235–271 (VDLDKFRQILLNHCDVNKDGKIQKSELALCLGLKANP). Positions 21, 23, 25, 27, and 32 each coordinate Ca(2+). Ca(2+) is bound by residues Asp-113, Asp-115, Ser-117, Glu-124, Asn-159, Asp-161, Arg-163, Asp-168, Asp-205, Ser-207, Thr-209, Glu-216, Asp-249, Asn-251, Asp-253, Lys-255, and Glu-260.

The protein resides in the cytoplasm. This is Secretagogin (scgn) from Xenopus laevis (African clawed frog).